We begin with the raw amino-acid sequence, 572 residues long: Proline--tRNA ligase (572 aa).

Belongs to the class-II aminoacyl-tRNA synthetase family. ProS type 1 subfamily. In terms of assembly, homodimer.

Its subcellular location is the cytoplasm. The enzyme catalyses tRNA(Pro) + L-proline + ATP = L-prolyl-tRNA(Pro) + AMP + diphosphate. Its function is as follows. Catalyzes the attachment of proline to tRNA(Pro) in a two-step reaction: proline is first activated by ATP to form Pro-AMP and then transferred to the acceptor end of tRNA(Pro). As ProRS can inadvertently accommodate and process non-cognate amino acids such as alanine and cysteine, to avoid such errors it has two additional distinct editing activities against alanine. One activity is designated as 'pretransfer' editing and involves the tRNA(Pro)-independent hydrolysis of activated Ala-AMP. The other activity is designated 'posttransfer' editing and involves deacylation of mischarged Ala-tRNA(Pro). The misacylated Cys-tRNA(Pro) is not edited by ProRS. The polypeptide is Proline--tRNA ligase (Psychrobacter arcticus (strain DSM 17307 / VKM B-2377 / 273-4)).